The chain runs to 400 residues: Phosphoglycerate kinase (400 aa).

Residues 22–24 (DFN), R38, 61–64 (HLGR), R119, and R152 each bind substrate. ATP is bound by residues K205, G296, E327, and 353 to 356 (GGDT).

The protein belongs to the phosphoglycerate kinase family. As to quaternary structure, monomer.

The protein localises to the cytoplasm. The enzyme catalyses (2R)-3-phosphoglycerate + ATP = (2R)-3-phospho-glyceroyl phosphate + ADP. The protein operates within carbohydrate degradation; glycolysis; pyruvate from D-glyceraldehyde 3-phosphate: step 2/5. This Campylobacter jejuni subsp. jejuni serotype O:23/36 (strain 81-176) protein is Phosphoglycerate kinase.